The chain runs to 152 residues: Large ribosomal subunit protein uL13 (152 aa).

The tract at residues 133 to 152 (EHPHQAQKPQPLTINTIPGA) is disordered. Polar residues predominate over residues 139 to 152 (QKPQPLTINTIPGA).

It belongs to the universal ribosomal protein uL13 family. In terms of assembly, part of the 50S ribosomal subunit.

Functionally, this protein is one of the early assembly proteins of the 50S ribosomal subunit, although it is not seen to bind rRNA by itself. It is important during the early stages of 50S assembly. The protein is Large ribosomal subunit protein uL13 of Thermosynechococcus vestitus (strain NIES-2133 / IAM M-273 / BP-1).